We begin with the raw amino-acid sequence, 220 residues long: uncharacterized protein (220 aa).

A helical transmembrane segment spans residues 20–42 (FFKKLVPIIIIISIVVITIMVII).

Its subcellular location is the membrane. This is an uncharacterized protein from Rickettsia prowazekii (strain Madrid E).